The following is a 90-amino-acid chain: MSSMDNTMQFNFNDDSFDADVQEVLLSVYDALEEKGYNPINQIVGYLLSGDPAYIPRHKDARTLIRKLERDELIETLVKSYLRSHGKENK.

This sequence belongs to the UPF0297 family.

The sequence is that of UPF0297 protein ABC1593 from Shouchella clausii (strain KSM-K16) (Alkalihalobacillus clausii).